Here is a 266-residue protein sequence, read N- to C-terminus: Probable phosphoadenosine phosphosulfate reductase (266 aa).

Residues 219 to 246 are disordered; that stretch reads TQPVREGEDERAGRWRGREKTECGLHSH. Residues 223 to 243 show a composition bias toward basic and acidic residues; sequence REGEDERAGRWRGREKTECGL.

The protein belongs to the PAPS reductase family. CysH subfamily.

Its subcellular location is the cytoplasm. The protein localises to the nucleus. It carries out the reaction [thioredoxin]-disulfide + sulfite + adenosine 3',5'-bisphosphate + 2 H(+) = [thioredoxin]-dithiol + 3'-phosphoadenylyl sulfate. Its pathway is sulfur metabolism; hydrogen sulfide biosynthesis; sulfite from sulfate: step 3/3. In terms of biological role, the NADP dependent reduction of PAPS into sulfite involves thioredoxin which probably plays the role of a thiol carrier. Required for methionine synthesis. This is Probable phosphoadenosine phosphosulfate reductase (met16) from Schizosaccharomyces pombe (strain 972 / ATCC 24843) (Fission yeast).